Here is a 396-residue protein sequence, read N- to C-terminus: S-adenosylmethionine synthase (396 aa).

ATP is bound at residue His16. Asp18 serves as a coordination point for Mg(2+). Glu44 provides a ligand contact to K(+). Positions 57 and 100 each coordinate L-methionine. The segment at 100 to 110 (QSVDIAQGVDR) is flexible loop. Residues 165–167 (DAK), Asp240, 246–247 (RK), Ala263, and Lys267 each bind ATP. Asp240 is an L-methionine binding site. Residue Lys271 coordinates L-methionine.

This sequence belongs to the AdoMet synthase family. As to quaternary structure, homotetramer; dimer of dimers. Requires Mg(2+) as cofactor. The cofactor is K(+).

It is found in the cytoplasm. It carries out the reaction L-methionine + ATP + H2O = S-adenosyl-L-methionine + phosphate + diphosphate. The protein operates within amino-acid biosynthesis; S-adenosyl-L-methionine biosynthesis; S-adenosyl-L-methionine from L-methionine: step 1/1. Its function is as follows. Catalyzes the formation of S-adenosylmethionine (AdoMet) from methionine and ATP. The overall synthetic reaction is composed of two sequential steps, AdoMet formation and the subsequent tripolyphosphate hydrolysis which occurs prior to release of AdoMet from the enzyme. The protein is S-adenosylmethionine synthase of Pseudomonas putida (strain ATCC 700007 / DSM 6899 / JCM 31910 / BCRC 17059 / LMG 24140 / F1).